A 440-amino-acid chain; its full sequence is NADH-quinone oxidoreductase subunit D 1 (440 aa).

The protein belongs to the complex I 49 kDa subunit family. In terms of assembly, NDH-1 is composed of 14 different subunits. Subunits NuoB, C, D, E, F, and G constitute the peripheral sector of the complex.

The protein localises to the cell membrane. The enzyme catalyses a quinone + NADH + 5 H(+)(in) = a quinol + NAD(+) + 4 H(+)(out). Functionally, NDH-1 shuttles electrons from NADH, via FMN and iron-sulfur (Fe-S) centers, to quinones in the respiratory chain. The immediate electron acceptor for the enzyme in this species is believed to be a menaquinone. Couples the redox reaction to proton translocation (for every two electrons transferred, four hydrogen ions are translocated across the cytoplasmic membrane), and thus conserves the redox energy in a proton gradient. The polypeptide is NADH-quinone oxidoreductase subunit D 1 (Streptomyces griseus subsp. griseus (strain JCM 4626 / CBS 651.72 / NBRC 13350 / KCC S-0626 / ISP 5235)).